Consider the following 128-residue polypeptide: Large ribosomal subunit protein bL17 (128 aa).

Belongs to the bacterial ribosomal protein bL17 family. Part of the 50S ribosomal subunit. Contacts protein L32.

In Proteus mirabilis (strain HI4320), this protein is Large ribosomal subunit protein bL17.